The following is a 214-amino-acid chain: Putative F-box protein At3g58910 (214 aa).

Residues 1-47 (MDRVSSLPDELLCHILSFLTTKETALTSLLSKREIIPLIKSVVFPTL) form the F-box domain.

In Arabidopsis thaliana (Mouse-ear cress), this protein is Putative F-box protein At3g58910.